The chain runs to 563 residues: Arginine--tRNA ligase (563 aa).

The short motif at 121 to 131 (PNIAKPFSIGH) is the 'HIGH' region element.

This sequence belongs to the class-I aminoacyl-tRNA synthetase family. As to quaternary structure, monomer.

It localises to the cytoplasm. The catalysed reaction is tRNA(Arg) + L-arginine + ATP = L-arginyl-tRNA(Arg) + AMP + diphosphate. The polypeptide is Arginine--tRNA ligase (Streptococcus pyogenes serotype M18 (strain MGAS8232)).